Reading from the N-terminus, the 160-residue chain is 2-C-methyl-D-erythritol 2,4-cyclodiphosphate synthase (160 aa).

2 residues coordinate a divalent metal cation: Asp-11 and His-13. Residues 11-13 (DVH) and 37-38 (HS) contribute to the 4-CDP-2-C-methyl-D-erythritol 2-phosphate site. His-45 serves as a coordination point for a divalent metal cation. 4-CDP-2-C-methyl-D-erythritol 2-phosphate contacts are provided by residues 59–61 (DIG) and Arg-145.

The protein belongs to the IspF family. Homotrimer. A divalent metal cation serves as cofactor.

The enzyme catalyses 4-CDP-2-C-methyl-D-erythritol 2-phosphate = 2-C-methyl-D-erythritol 2,4-cyclic diphosphate + CMP. Its pathway is isoprenoid biosynthesis; isopentenyl diphosphate biosynthesis via DXP pathway; isopentenyl diphosphate from 1-deoxy-D-xylulose 5-phosphate: step 4/6. Involved in the biosynthesis of isopentenyl diphosphate (IPP) and dimethylallyl diphosphate (DMAPP), two major building blocks of isoprenoid compounds. Catalyzes the conversion of 4-diphosphocytidyl-2-C-methyl-D-erythritol 2-phosphate (CDP-ME2P) to 2-C-methyl-D-erythritol 2,4-cyclodiphosphate (ME-CPP) with a corresponding release of cytidine 5-monophosphate (CMP). This chain is 2-C-methyl-D-erythritol 2,4-cyclodiphosphate synthase, found in Neisseria meningitidis serogroup A / serotype 4A (strain DSM 15465 / Z2491).